The chain runs to 847 residues: Bifunctional protein argC, mitochondrial (847 aa).

Residues 100-331 (QIVLVKIGGG…PPSTSITITS (232 aa)) are acetylglutamate kinase. The 157-residue stretch at 352 to 508 (GEVMHSHESP…CLSQSSTYLS (157 aa)) folds into the N-acetyltransferase domain. Positions 531–846 (FRVGLIGARG…LDELASIKNE (316 aa)) are N-acetyl-gamma-glutamyl-phosphate reductase. Cysteine 665 is an active-site residue.

In the N-terminal section; belongs to the acetylglutamate kinase family. It in the C-terminal section; belongs to the NAGSA dehydrogenase family.

It is found in the mitochondrion. It catalyses the reaction N-acetyl-L-glutamate 5-semialdehyde + phosphate + NADP(+) = N-acetyl-L-glutamyl 5-phosphate + NADPH + H(+). The enzyme catalyses N-acetyl-L-glutamate + ATP = N-acetyl-L-glutamyl 5-phosphate + ADP. It functions in the pathway amino-acid biosynthesis; L-arginine biosynthesis; N(2)-acetyl-L-ornithine from L-glutamate: step 2/4. Its pathway is amino-acid biosynthesis; L-arginine biosynthesis; N(2)-acetyl-L-ornithine from L-glutamate: step 3/4. The chain is Bifunctional protein argC, mitochondrial (argC) from Dictyostelium discoideum (Social amoeba).